We begin with the raw amino-acid sequence, 295 residues long: MTHLFEGVGVALTTPFTNNKVNLEALKAHVNFLLENNAQAIIVNGTTAESPTLTTDEKELILKTVIDLVDKRVPVIAGTGTNDTEKSIQASIQAKALGADAIMLITTYYNKTNQRGLVKHFEAIADAVKLPVVLYNVPSRTNMTIEPETVEILSQHPSIVALKDATNDFEYLEEVKKRIDTNSFALYSGNDDNVVEYYQRGGKGVISVIANVIPKEFQALYDAQQSGLDIQDQFKPIGILLSALSVDINPIPIKALTSYLGFGNYELRLPLITLEDTDTKVLREAYNIFKAGENE.

Thr-47 contacts pyruvate. Tyr-135 functions as the Proton donor/acceptor in the catalytic mechanism. Residue Lys-163 is the Schiff-base intermediate with substrate of the active site. Ile-206 contacts pyruvate.

The protein belongs to the DapA family. In terms of assembly, homodimer.

It localises to the cytoplasm. It catalyses the reaction L-aspartate 4-semialdehyde + pyruvate = (2S,4S)-4-hydroxy-2,3,4,5-tetrahydrodipicolinate + H2O + H(+). Its pathway is amino-acid biosynthesis; L-lysine biosynthesis via DAP pathway; (S)-tetrahydrodipicolinate from L-aspartate: step 3/4. In terms of biological role, catalyzes the condensation of (S)-aspartate-beta-semialdehyde [(S)-ASA] and pyruvate to 4-hydroxy-tetrahydrodipicolinate (HTPA). This is 4-hydroxy-tetrahydrodipicolinate synthase from Staphylococcus aureus (strain bovine RF122 / ET3-1).